The chain runs to 147 residues: NADPH-dependent 7-cyano-7-deazaguanine reductase (147 aa).

A disordered region spans residues 1–23; it reads MQTTHLGKNSPIPQSPEEASLDY. The active-site Thioimide intermediate is the Cys-46. Asp-53 acts as the Proton donor in catalysis. Substrate is bound by residues 68 to 70 and 87 to 88; these read VES and HE.

It belongs to the GTP cyclohydrolase I family. QueF type 1 subfamily.

It localises to the cytoplasm. It catalyses the reaction 7-aminomethyl-7-carbaguanine + 2 NADP(+) = 7-cyano-7-deazaguanine + 2 NADPH + 3 H(+). Its pathway is tRNA modification; tRNA-queuosine biosynthesis. Its function is as follows. Catalyzes the NADPH-dependent reduction of 7-cyano-7-deazaguanine (preQ0) to 7-aminomethyl-7-deazaguanine (preQ1). The chain is NADPH-dependent 7-cyano-7-deazaguanine reductase from Zymomonas mobilis subsp. mobilis (strain ATCC 31821 / ZM4 / CP4).